The following is a 38-amino-acid chain: Photosystem II reaction center protein L (38 aa).

A helical membrane pass occupies residues Ser17 to Phe37.

It belongs to the PsbL family. As to quaternary structure, PSII is composed of 1 copy each of membrane proteins PsbA, PsbB, PsbC, PsbD, PsbE, PsbF, PsbH, PsbI, PsbJ, PsbK, PsbL, PsbM, PsbT, PsbX, PsbY, PsbZ, Psb30/Ycf12, peripheral proteins PsbO, CyanoQ (PsbQ), PsbU, PsbV and a large number of cofactors. It forms dimeric complexes.

The protein localises to the cellular thylakoid membrane. In terms of biological role, one of the components of the core complex of photosystem II (PSII). PSII is a light-driven water:plastoquinone oxidoreductase that uses light energy to abstract electrons from H(2)O, generating O(2) and a proton gradient subsequently used for ATP formation. It consists of a core antenna complex that captures photons, and an electron transfer chain that converts photonic excitation into a charge separation. This subunit is found at the monomer-monomer interface and is required for correct PSII assembly and/or dimerization. In Acaryochloris marina (strain MBIC 11017), this protein is Photosystem II reaction center protein L.